The chain runs to 602 residues: Pro-neuregulin-1, membrane-bound isoform (602 aa).

At 1 to 206 (MWATSEGPLQ…MEAEELYQKR (206 aa)) the chain is on the extracellular side. Asn21 carries N-linked (GlcNAc...) asparagine glycosylation. The Ig-like C2-type domain maps to 29–123 (PKLKEMKNQE…DSTKASVIIT (95 aa)). The cysteines at positions 49 and 105 are disulfide-linked. N-linked (GlcNAc...) asparagine glycans are attached at residues Asn113 and Asn126. The EGF-like domain maps to 137-181 (HLTKCDIKQKAFCVNGGECYMVKDLPNPPRYLCRCPNEFTGDRCQ). Disulfide bonds link Cys141–Cys155, Cys149–Cys169, and Cys171–Cys180. The helical transmembrane segment at 207–229 (VLTITGICIALLVVGIMCVVAYC) threads the bilayer. Residues 230-602 (KTKKQRKKLH…VIANQDPIAV (373 aa)) lie on the Cytoplasmic side of the membrane. 4 disordered regions span residues 293-366 (ETSF…EGNS), 391-421 (MTTP…PVSS), 460-479 (FNSF…PSPL), and 486-553 (EYET…FLSI). Positions 294 to 314 (TSFSTSHYTSTTHHSMTVTQT) are enriched in low complexity. A compositionally biased stretch (polar residues) spans 315–324 (PSHSWSNGHT). Residues 325–341 (ESILSESHSVLVSSSVE) show a composition bias toward low complexity. A compositionally biased stretch (polar residues) spans 460-474 (FNSFHNNPTHESNSL). A compositionally biased stretch (basic residues) spans 504-514 (TNSRRVKRTKP). Residues 527 to 536 (DTSSQSTSSE) are compositionally biased toward low complexity.

Belongs to the neuregulin family. In terms of processing, proteolytic cleavage close to the plasma membrane on the external face leads to the release of the soluble growth factor form. Post-translationally, extensive glycosylation precedes the proteolytic cleavage.

The protein localises to the cell membrane. Its subcellular location is the secreted. Its function is as follows. Direct ligand for the ERBB tyrosine kinase receptors. The multiple isoforms perform diverse functions: cysteine-rich domain containing isoforms (isoform 2-isoform 4) probably regulate the expression of nicotinic acetylcholine receptors at developing interneuronal synapses. Isoform Ig-NRG is required for the initial induction and/or maintenance of the mature levels of acetylcholine receptors at neuromuscular synapses. Binds to ERBB3 and integrins to form a complex which is essential for NRG1-ERBB signaling. In Gallus gallus (Chicken), this protein is Pro-neuregulin-1, membrane-bound isoform (NRG1).